The primary structure comprises 131 residues: MSMSDPIADMLTRIRNAQMVEKAVVLVPSSKVKVAIAQVLKDEGYIDGFSVKANDGKPQLEIALKYYAGRPVIERIERVSRPGLRVYKGHGAIPQVMNGLGVAIVTTPQGVMTDRKARATGTGGEVLCYVA.

Belongs to the universal ribosomal protein uS8 family. Part of the 30S ribosomal subunit. Contacts proteins S5 and S12.

Its function is as follows. One of the primary rRNA binding proteins, it binds directly to 16S rRNA central domain where it helps coordinate assembly of the platform of the 30S subunit. The chain is Small ribosomal subunit protein uS8 from Polaromonas naphthalenivorans (strain CJ2).